Consider the following 343-residue polypeptide: Ferredoxin--NADP reductase (343 aa).

The FAD site is built by Asp36, Gln44, Tyr49, Val89, Phe124, Asp289, and Thr330.

This sequence belongs to the ferredoxin--NADP reductase type 2 family. As to quaternary structure, homodimer. It depends on FAD as a cofactor.

The enzyme catalyses 2 reduced [2Fe-2S]-[ferredoxin] + NADP(+) + H(+) = 2 oxidized [2Fe-2S]-[ferredoxin] + NADPH. The polypeptide is Ferredoxin--NADP reductase (Mesorhizobium japonicum (strain LMG 29417 / CECT 9101 / MAFF 303099) (Mesorhizobium loti (strain MAFF 303099))).